The following is a 230-amino-acid chain: Ribonuclease 3 (230 aa).

One can recognise an RNase III domain in the interval 5-125; it reads YSRFYNILGY…VIGAIYLDSD (121 aa). Glu-40 contacts Mg(2+). Asp-44 is an active-site residue. The Mg(2+) site is built by Asp-111 and Glu-114. Residue Glu-114 is part of the active site. A DRBM domain is found at 153 to 223; that stretch reads DSKSKLQEIL…AEKMIEMLSQ (71 aa).

Belongs to the ribonuclease III family. In terms of assembly, homodimer. The cofactor is Mg(2+).

It localises to the cytoplasm. It carries out the reaction Endonucleolytic cleavage to 5'-phosphomonoester.. Its function is as follows. Digests double-stranded RNA. Involved in the processing of primary rRNA transcript to yield the immediate precursors to the large and small rRNAs (23S and 16S). Processes some mRNAs, and tRNAs when they are encoded in the rRNA operon. Processes pre-crRNA and tracrRNA of type II CRISPR loci if present in the organism. This chain is Ribonuclease 3, found in Francisella tularensis subsp. tularensis (strain FSC 198).